The primary structure comprises 115 residues: Cell division topological specificity factor (115 aa).

The interval 89-115 (TGQIQLKEPKNQSEVDSPETEGKDQNS) is disordered.

This sequence belongs to the MinE family.

Its function is as follows. Prevents the cell division inhibition by proteins MinC and MinD at internal division sites while permitting inhibition at polar sites. This ensures cell division at the proper site by restricting the formation of a division septum at the midpoint of the long axis of the cell. This chain is Cell division topological specificity factor, found in Prochlorococcus marinus (strain NATL2A).